The sequence spans 716 residues: MLPEEDLKIIKKELGREPTLVEQGCFLNLWSEHCSYRSSAPLLKTFTTTGENVIIGPGDDAAIIKFEDGYVLAIGMESHNHPSYVDPYNGAATGVGGIVRDIISMGARPIALMDPLYFGPLDTPKNLFLFEQIIKGIAGYGNCIGVPVVNGETFFDRRYSGNPLVNVVAVGLCKEEKVMTSRSQKAGNKLILAGSSTGKDGLGGASFASRDLSESAEAEDRPSVQVGDPYTEKLVMEMTLEAIDKGYIKSCKDLGAAGLGGASSELAAKGGLGAYIIADAVPQREPEMNAYEILLAESQERMVFEVAPEDVDAVLALVQKYDLNGAVIGHLTEKPNYTVEFRGEIVADIPIGFLTGGAPTCEKPSEAPIHREEGKKPETPEDLKAAFMKVLSSHNIASKEWIYRQYDHEVQLRTVVKPGEDSGVLRITDKKGIALSCGCQPRATLLDPYTGGRTAIIENAMNLAVKGAEGLAIVNCLNFGNPENPETYWQFKNAVLGLGDAARELSIPVVGGNVSLYNESDEFRTAIPPTPSIGMIGKVDLETPLPSGFFAKTGDSIILVGETVPEMGGSEYYSCMGAGNAGKVPEVPKNAPEIIKAVIEAVKSGKLNSAHDISLGGIGAGLARMCKNMGGKVDVSEIAGGMKEDEFLFSEAPARALLATAEPEAVQELLKGVPHAVIGTVGGDALEIKGKDFELFISLEEIKNAHESLTKFMMMG.

The active site involves His33. Tyr36 serves as a coordination point for ATP. Residue Glu77 coordinates Mg(2+). Substrate-binding positions include 78–81 (SHNH) and Arg100. His79 (proton acceptor) is an active-site residue. Asp101 lines the Mg(2+) pocket. Gln225 lines the substrate pocket. Mg(2+) is bound at residue Asp253. Substrate is bound at residue 297–299 (ESQ). Positions 475 and 512 each coordinate ATP. Asn513 provides a ligand contact to Mg(2+). Residue Ser515 participates in substrate binding.

Belongs to the FGAMS family. In terms of assembly, monomer. Part of the FGAM synthase complex composed of 1 PurL, 1 PurQ and 2 PurS subunits.

The protein localises to the cytoplasm. The enzyme catalyses N(2)-formyl-N(1)-(5-phospho-beta-D-ribosyl)glycinamide + L-glutamine + ATP + H2O = 2-formamido-N(1)-(5-O-phospho-beta-D-ribosyl)acetamidine + L-glutamate + ADP + phosphate + H(+). It functions in the pathway purine metabolism; IMP biosynthesis via de novo pathway; 5-amino-1-(5-phospho-D-ribosyl)imidazole from N(2)-formyl-N(1)-(5-phospho-D-ribosyl)glycinamide: step 1/2. Its function is as follows. Part of the phosphoribosylformylglycinamidine synthase complex involved in the purines biosynthetic pathway. Catalyzes the ATP-dependent conversion of formylglycinamide ribonucleotide (FGAR) and glutamine to yield formylglycinamidine ribonucleotide (FGAM) and glutamate. The FGAM synthase complex is composed of three subunits. PurQ produces an ammonia molecule by converting glutamine to glutamate. PurL transfers the ammonia molecule to FGAR to form FGAM in an ATP-dependent manner. PurS interacts with PurQ and PurL and is thought to assist in the transfer of the ammonia molecule from PurQ to PurL. The sequence is that of Phosphoribosylformylglycinamidine synthase subunit PurL from Methanosarcina mazei (strain ATCC BAA-159 / DSM 3647 / Goe1 / Go1 / JCM 11833 / OCM 88) (Methanosarcina frisia).